We begin with the raw amino-acid sequence, 91 residues long: MGLLDLFKKKGSSDVAKDRLKLLLVSDRANCSPEVMEMIKNDIIKVISKYMEIDTDGLDIQITSTESDTNNGSVPAIFANIPIKDMRNSEK.

This sequence belongs to the MinE family.

In terms of biological role, prevents the cell division inhibition by proteins MinC and MinD at internal division sites while permitting inhibition at polar sites. This ensures cell division at the proper site by restricting the formation of a division septum at the midpoint of the long axis of the cell. This chain is Cell division topological specificity factor, found in Lachnospira eligens (strain ATCC 27750 / DSM 3376 / VPI C15-48 / C15-B4) (Eubacterium eligens).